Here is a 403-residue protein sequence, read N- to C-terminus: Phosphopentomutase (403 aa).

Residues Asp-13, Asp-298, His-303, Asp-339, His-340, and His-351 each coordinate Mn(2+).

Belongs to the phosphopentomutase family. Mn(2+) is required as a cofactor.

The protein resides in the cytoplasm. It catalyses the reaction 2-deoxy-alpha-D-ribose 1-phosphate = 2-deoxy-D-ribose 5-phosphate. The enzyme catalyses alpha-D-ribose 1-phosphate = D-ribose 5-phosphate. The protein operates within carbohydrate degradation; 2-deoxy-D-ribose 1-phosphate degradation; D-glyceraldehyde 3-phosphate and acetaldehyde from 2-deoxy-alpha-D-ribose 1-phosphate: step 1/2. Isomerase that catalyzes the conversion of deoxy-ribose 1-phosphate (dRib-1-P) and ribose 1-phosphate (Rib-1-P) to deoxy-ribose 5-phosphate (dRib-5-P) and ribose 5-phosphate (Rib-5-P), respectively. In Streptococcus pneumoniae serotype 4 (strain ATCC BAA-334 / TIGR4), this protein is Phosphopentomutase.